Here is a 172-residue protein sequence, read N- to C-terminus: MSQSLTSSVETDSKTGSSKAISFQDYLDLSALDWARLRAILAPTLYVDYTKIGKEKWDAMSADDFMAMVSNDDFLGDPCVKTQHLIGATYWERVSESKVIGHHQLRAAHQVYTSPDLKTVKLRGHSHATNEHYYVKSSGVWKFAGLKPEVRWNEYKFEEVFKGSYTQSEKQS.

Tyr49 is a binding site for substrate. Residues His84 and His109 contribute to the active site. Asn130 serves as a coordination point for substrate.

This sequence belongs to the scytalone dehydratase family. In terms of assembly, homotrimer. Each subunit contains an active site, located in the central part of the hydrophobic core of the monomer, which functions independently.

Its function is as follows. Scytalone dehydratase-like protein; part of the Pks2 gene cluster that mediates the formation of infectious structures (appressoria), enabling these fungi to kill insects faster. The product of the Pks2 gene cluster is different from the one of Pks1 and has still not been identified. The polypeptide is Scytalone dehydratase-like protein Arp1 (Metarhizium guizhouense (strain ARSEF 977)).